Consider the following 419-residue polypeptide: Ras association domain-containing protein 8 (419 aa).

The region spanning 1–82 is the Ras-associating domain; that stretch reads MELKVWVDGV…VQLILRRTGP (82 aa). 2 positions are modified to phosphoserine: S105 and S129. Phosphothreonine is present on T131. A disordered region spans residues 372 to 399; that stretch reads ASQADIETEAPFQSGSLKRPGSSRQLPS. Positions 382-399 are enriched in polar residues; the sequence is PFQSGSLKRPGSSRQLPS. S387 carries the post-translational modification Phosphoserine.

The sequence is that of Ras association domain-containing protein 8 (Rassf8) from Mus musculus (Mouse).